A 511-amino-acid polypeptide reads, in one-letter code: 3-octaprenyl-4-hydroxybenzoate carboxy-lyase (511 aa).

Mn(2+) is bound at residue N176. Prenylated FMN is bound by residues 179-181, 193-195, and 198-199; these read IYR, RWL, and RG. A Mn(2+)-binding site is contributed by E242. Residue D311 is the Proton donor of the active site.

It belongs to the UbiD family. In terms of assembly, homohexamer. Prenylated FMN serves as cofactor. Requires Mn(2+) as cofactor.

The protein resides in the cell membrane. The catalysed reaction is a 4-hydroxy-3-(all-trans-polyprenyl)benzoate + H(+) = a 2-(all-trans-polyprenyl)phenol + CO2. The protein operates within cofactor biosynthesis; ubiquinone biosynthesis. Catalyzes the decarboxylation of 3-octaprenyl-4-hydroxy benzoate to 2-octaprenylphenol, an intermediate step in ubiquinone biosynthesis. This chain is 3-octaprenyl-4-hydroxybenzoate carboxy-lyase, found in Laribacter hongkongensis (strain HLHK9).